The sequence spans 492 residues: Aspartyl/glutamyl-tRNA(Asn/Gln) amidotransferase subunit B (492 aa).

It belongs to the GatB/GatE family. GatB subfamily. In terms of assembly, heterotrimer of A, B and C subunits.

It carries out the reaction L-glutamyl-tRNA(Gln) + L-glutamine + ATP + H2O = L-glutaminyl-tRNA(Gln) + L-glutamate + ADP + phosphate + H(+). It catalyses the reaction L-aspartyl-tRNA(Asn) + L-glutamine + ATP + H2O = L-asparaginyl-tRNA(Asn) + L-glutamate + ADP + phosphate + 2 H(+). Functionally, allows the formation of correctly charged Asn-tRNA(Asn) or Gln-tRNA(Gln) through the transamidation of misacylated Asp-tRNA(Asn) or Glu-tRNA(Gln) in organisms which lack either or both of asparaginyl-tRNA or glutaminyl-tRNA synthetases. The reaction takes place in the presence of glutamine and ATP through an activated phospho-Asp-tRNA(Asn) or phospho-Glu-tRNA(Gln). The sequence is that of Aspartyl/glutamyl-tRNA(Asn/Gln) amidotransferase subunit B from Bradyrhizobium sp. (strain BTAi1 / ATCC BAA-1182).